Here is a 244-residue protein sequence, read N- to C-terminus: Small ribosomal subunit protein eS4 (244 aa).

Positions 43-106 (LPLLLVVRDI…DENYLVLFDE (64 aa)) constitute an S4 RNA-binding domain.

This sequence belongs to the eukaryotic ribosomal protein eS4 family.

The sequence is that of Small ribosomal subunit protein eS4 from Methanococcus maripaludis (strain C6 / ATCC BAA-1332).